A 260-amino-acid polypeptide reads, in one-letter code: Ribosomal RNA small subunit methyltransferase G (260 aa).

S-adenosyl-L-methionine is bound by residues Gly94, Phe99, 117–119, 145–146, and Arg164; these read DST and AE. The tract at residues 236–260 is disordered; it reads APTPPPYPRSPGTPKRQPLGQSNRP. Positions 237–246 are enriched in pro residues; that stretch reads PTPPPYPRSP.

It belongs to the methyltransferase superfamily. RNA methyltransferase RsmG family.

It is found in the cytoplasm. Functionally, specifically methylates the N7 position of a guanine in 16S rRNA. The protein is Ribosomal RNA small subunit methyltransferase G of Synechococcus sp. (strain JA-2-3B'a(2-13)) (Cyanobacteria bacterium Yellowstone B-Prime).